The chain runs to 182 residues: Ribosome maturation factor RimM (182 aa).

The region spanning 103 to 182 is the PRC barrel domain; it reads EDEFYWRELF…RIEVDWDPAF (80 aa).

Belongs to the RimM family. Binds ribosomal protein uS19.

It localises to the cytoplasm. Its function is as follows. An accessory protein needed during the final step in the assembly of 30S ribosomal subunit, possibly for assembly of the head region. Essential for efficient processing of 16S rRNA. May be needed both before and after RbfA during the maturation of 16S rRNA. It has affinity for free ribosomal 30S subunits but not for 70S ribosomes. The polypeptide is Ribosome maturation factor RimM (Vibrio cholerae serotype O1 (strain ATCC 39315 / El Tor Inaba N16961)).